The sequence spans 596 residues: Fructan 1-exohydrolase w3 (596 aa).

Residues 1–20 form the signal peptide; that stretch reads MAQAWAFLLPVLVLGSYVTS. The active site involves D75. Residues N168, N236, and N248 are each glycosylated (N-linked (GlcNAc...) asparagine). Residues C446 and C492 are joined by a disulfide bond.

Belongs to the glycosyl hydrolase 32 family. As to expression, expressed in the stem, particularly the penultimate internode. Little expression is detected in roots and in the peduncle part of the stem.

It catalyses the reaction Hydrolysis of terminal, non-reducing (2-&gt;1)-linked beta-D-fructofuranose residues in fructans.. Its activity is regulated as follows. Inhibited by sucrose. Hydrolyzes inulin-type beta-(2,1)-fructans and beta-(2,1)-linkages in branched fructans. Has low activity against beta-(2,6)-linked fructans. May play a role as a beta-(2,1)-trimmer during graminan biosynthesis. The polypeptide is Fructan 1-exohydrolase w3 (Triticum aestivum (Wheat)).